Here is a 543-residue protein sequence, read N- to C-terminus: CTP synthase (543 aa).

The tract at residues 1-265 (MARFIFITGG…DSEVLRAFGI (265 aa)) is amidoligase domain. Ser-13 is a CTP binding site. Ser-13 serves as a coordination point for UTP. 14 to 19 (SLGKGL) contributes to the ATP binding site. Tyr-54 provides a ligand contact to L-glutamine. Asp-71 lines the ATP pocket. Residues Asp-71 and Glu-139 each coordinate Mg(2+). CTP-binding positions include 146–148 (DIE), 186–191 (KTKPTQ), and Lys-222. UTP is bound by residues 186-191 (KTKPTQ) and Lys-222. One can recognise a Glutamine amidotransferase type-1 domain in the interval 291–542 (TIGVVGKYVS…IEAAVKQSRL (252 aa)). Gly-354 contributes to the L-glutamine binding site. Cys-381 (nucleophile; for glutamine hydrolysis) is an active-site residue. Residues 382–385 (LGMQ), Glu-405, and Arg-470 each bind L-glutamine. Catalysis depends on residues His-515 and Glu-517.

This sequence belongs to the CTP synthase family. In terms of assembly, homotetramer.

The catalysed reaction is UTP + L-glutamine + ATP + H2O = CTP + L-glutamate + ADP + phosphate + 2 H(+). It catalyses the reaction L-glutamine + H2O = L-glutamate + NH4(+). It carries out the reaction UTP + NH4(+) + ATP = CTP + ADP + phosphate + 2 H(+). It functions in the pathway pyrimidine metabolism; CTP biosynthesis via de novo pathway; CTP from UDP: step 2/2. With respect to regulation, allosterically activated by GTP, when glutamine is the substrate; GTP has no effect on the reaction when ammonia is the substrate. The allosteric effector GTP functions by stabilizing the protein conformation that binds the tetrahedral intermediate(s) formed during glutamine hydrolysis. Inhibited by the product CTP, via allosteric rather than competitive inhibition. Catalyzes the ATP-dependent amination of UTP to CTP with either L-glutamine or ammonia as the source of nitrogen. Regulates intracellular CTP levels through interactions with the four ribonucleotide triphosphates. In Sphingopyxis alaskensis (strain DSM 13593 / LMG 18877 / RB2256) (Sphingomonas alaskensis), this protein is CTP synthase.